Reading from the N-terminus, the 825-residue chain is Endoglucanase C (825 aa).

The N-terminal stretch at 1–28 (MRNKLRRLLAIMMAVLLITSLFAPMVSA) is a signal peptide. The active-site Proton donor is Glu219. Glu335 acts as the Nucleophile in catalysis. A compositionally biased stretch (basic and acidic residues) spans 607-621 (DRESVPEPVEHDTKG). The interval 607 to 635 (DRESVPEPVEHDTKGDSALPSDFEDGTRQ) is disordered.

This sequence belongs to the glycosyl hydrolase 5 (cellulase A) family.

The catalysed reaction is Endohydrolysis of (1-&gt;4)-beta-D-glucosidic linkages in cellulose, lichenin and cereal beta-D-glucans.. This is Endoglucanase C (celC) from Evansella cellulosilytica (strain ATCC 21833 / DSM 2522 / FERM P-1141 / JCM 9156 / N-4) (Bacillus cellulosilyticus).